The sequence spans 598 residues: DNA primase (598 aa).

The CHC2-type zinc finger occupies 38–62; sequence CPFHDEKTPSFTVSEDKQICHCFGC. The Toprim domain occupies 260–341; it reads DEIILLEGFM…NVYVVQLPSG (82 aa). Mg(2+)-binding residues include E266, D310, and D312.

This sequence belongs to the DnaG primase family. As to quaternary structure, monomer. Interacts with DnaB. Requires Zn(2+) as cofactor. Mg(2+) serves as cofactor.

The enzyme catalyses ssDNA + n NTP = ssDNA/pppN(pN)n-1 hybrid + (n-1) diphosphate.. In terms of biological role, RNA polymerase that catalyzes the synthesis of short RNA molecules used as primers for DNA polymerase during DNA replication. This Staphylococcus epidermidis (strain ATCC 12228 / FDA PCI 1200) protein is DNA primase.